A 206-amino-acid polypeptide reads, in one-letter code: High frequency lysogenization protein HflD homolog (206 aa).

The protein belongs to the HflD family.

It is found in the cytoplasm. Its subcellular location is the cell inner membrane. This chain is High frequency lysogenization protein HflD homolog, found in Marinobacter nauticus (strain ATCC 700491 / DSM 11845 / VT8) (Marinobacter aquaeolei).